The following is a 688-amino-acid chain: Polyribonucleotide nucleotidyltransferase (688 aa).

D484 and D490 together coordinate Mg(2+). Positions 550–609 constitute a KH domain; sequence PQTEIFNVAPDKIIEIIGQGGRVIKEIVEKFEVKIDLNTPSGEVKIMGNKERVLKTKEFI. Positions 626 to 688 constitute an S1 motif domain; that stretch reads DEVLEAQVKR…NKGKIALDLA (63 aa).

This sequence belongs to the polyribonucleotide nucleotidyltransferase family. Mg(2+) is required as a cofactor.

The protein localises to the cytoplasm. The enzyme catalyses RNA(n+1) + phosphate = RNA(n) + a ribonucleoside 5'-diphosphate. In terms of biological role, involved in mRNA degradation. Catalyzes the phosphorolysis of single-stranded polyribonucleotides processively in the 3'- to 5'-direction. This is Polyribonucleotide nucleotidyltransferase from Helicobacter pylori (strain J99 / ATCC 700824) (Campylobacter pylori J99).